Reading from the N-terminus, the 142-residue chain is Movement protein (142 aa).

The interval M1 to Y142 is disordered. 2 stretches are compositionally biased toward polar residues: residues R9–E22 and L33–A43. A compositionally biased stretch (low complexity) spans S50 to P62. 2 stretches are compositionally biased toward polar residues: residues M74 to P95 and T113 to T124. The span at K125–Y142 shows a compositional bias: basic and acidic residues.

The protein belongs to the luteoviruses movement protein family.

Functionally, transports viral genome to neighboring plant cells directly through plasmosdesmata, without any budding. The movement protein allows efficient cell to cell propagation, by bypassing the host cell wall barrier. The protein is Movement protein of Cicer arietinum (Chickpea).